The sequence spans 225 residues: Small ribosomal subunit protein uS3 (225 aa).

The KH type-2 domain occupies 38–106 (IRRFLQKKFK…PIGMNIIEVK (69 aa)).

The protein belongs to the universal ribosomal protein uS3 family. Part of the 30S ribosomal subunit. Forms a tight complex with proteins S10 and S14.

Binds the lower part of the 30S subunit head. Binds mRNA in the 70S ribosome, positioning it for translation. This Leptospira biflexa serovar Patoc (strain Patoc 1 / Ames) protein is Small ribosomal subunit protein uS3.